The chain runs to 152 residues: Large ribosomal subunit protein uL30 (152 aa).

Belongs to the universal ribosomal protein uL30 family. In terms of assembly, part of the 50S ribosomal subunit.

The protein is Large ribosomal subunit protein uL30 of Methanobrevibacter smithii (strain ATCC 35061 / DSM 861 / OCM 144 / PS).